Here is a 199-residue protein sequence, read N- to C-terminus: uncharacterized protein (199 aa).

It localises to the mitochondrion. This is an uncharacterized protein from Schizosaccharomyces pombe (strain 972 / ATCC 24843) (Fission yeast).